The primary structure comprises 214 residues: Clavatol biosynthesis cluster protein B (214 aa).

An N-terminal signal peptide occupies residues 1–17; sequence MAALSFQCLCVASAVRA. N-linked (GlcNAc...) asparagine glycans are attached at residues asparagine 103 and asparagine 204.

Its pathway is secondary metabolite biosynthesis. Functionally, part of the cla gene cluster that produces clavatol and ortho-quinone methide. The clavatol biosynthesis cluster cla and the terrestric acid cluster tra are both involved in the production of peniphenones and penilactones. The non-reducing PKS claF is responsible for the formation of clavatol from successive condensations of 3 malonyl-CoA units, presumably with a simple acetyl-CoA starter unit, and 2 methylation steps. The esterase claE probably collaborates with claF by catalyzing the hydrolysis of ACP-bound acyl intermediates to free the ACP from stalled intermediates. The clavatol oxidase claD then converts clavatol to hydroxyclavatol. Spontaneous dehydration of hydroxyclavatol leads to the accumulation of the highly active ortho-quinone methide. On the other hand, the PKS-NRPS hybrid traA is involved in the formation of crustosic acid, with the help of traB and traD. The polyketide synthase module (PKS) of traA is responsible for the synthesis of the polyketide backbone via the condensation of an acetyl-CoA starter unit with 3 malonyl-CoA units. The downstream nonribosomal peptide synthetase (NRPS) module then amidates the carboxyl end of the polyketide with L-malic acid. Because traA lacks a designated enoylreductase (ER) domain, the required activity is provided the enoyl reductase traG. Crustosic acid undergoes decarboxylation and isomerization to the terrestric acid, catalyzed by the 2-oxoglutarate-dependent dioxygenase traH. Both acids are further converted to the 2 gamma-butyrolactones (R)-5-methyltetronic acid and (S)-5-carboxylmethyltetronic acid, with involvement of the cytochrome P450 monooxygenase claJ. Spontaneous addition of the methide to these gamma-butyrolactones leads to peniphenone D and penilactone D, which undergo again stereospecific attacking by methide to give penilactones A and B. The function of claB has not been investigated yet. The polypeptide is Clavatol biosynthesis cluster protein B (Penicillium crustosum (Blue mold fungus)).